The primary structure comprises 109 residues: Nucleoid-associated protein Ssed_2851 (109 aa).

It belongs to the YbaB/EbfC family. In terms of assembly, homodimer.

It localises to the cytoplasm. It is found in the nucleoid. Binds to DNA and alters its conformation. May be involved in regulation of gene expression, nucleoid organization and DNA protection. The polypeptide is Nucleoid-associated protein Ssed_2851 (Shewanella sediminis (strain HAW-EB3)).